The chain runs to 229 residues: Cytochrome c oxidase subunit 2 (229 aa).

The Mitochondrial intermembrane segment spans residues 1-26 (MSTWANLGLQDSASPLMEQLIFFHDH). The chain crosses the membrane as a helical span at residues 27–48 (ALLILVMITVLVGYLMFMLFFN). The Mitochondrial matrix segment spans residues 49–62 (SYVNRFLLHGQLIE). Residues 63-82 (MIWTILPAIILLFIAMPSLR) form a helical membrane-spanning segment. The Mitochondrial intermembrane portion of the chain corresponds to 83–229 (LLYLLDEINE…IKWISNSVNS (147 aa)). Residues histidine 161, cysteine 196, glutamate 198, cysteine 200, histidine 204, and methionine 207 each coordinate Cu cation. Glutamate 198 contacts Mg(2+).

Belongs to the cytochrome c oxidase subunit 2 family. Component of the cytochrome c oxidase (complex IV, CIV), a multisubunit enzyme composed of a catalytic core of 3 subunits and several supernumerary subunits. The complex exists as a monomer or a dimer and forms supercomplexes (SCs) in the inner mitochondrial membrane with ubiquinol-cytochrome c oxidoreductase (cytochrome b-c1 complex, complex III, CIII). Cu cation serves as cofactor.

The protein localises to the mitochondrion inner membrane. It carries out the reaction 4 Fe(II)-[cytochrome c] + O2 + 8 H(+)(in) = 4 Fe(III)-[cytochrome c] + 2 H2O + 4 H(+)(out). In terms of biological role, component of the cytochrome c oxidase, the last enzyme in the mitochondrial electron transport chain which drives oxidative phosphorylation. The respiratory chain contains 3 multisubunit complexes succinate dehydrogenase (complex II, CII), ubiquinol-cytochrome c oxidoreductase (cytochrome b-c1 complex, complex III, CIII) and cytochrome c oxidase (complex IV, CIV), that cooperate to transfer electrons derived from NADH and succinate to molecular oxygen, creating an electrochemical gradient over the inner membrane that drives transmembrane transport and the ATP synthase. Cytochrome c oxidase is the component of the respiratory chain that catalyzes the reduction of oxygen to water. Electrons originating from reduced cytochrome c in the intermembrane space (IMS) are transferred via the dinuclear copper A center (CU(A)) of subunit 2 and heme A of subunit 1 to the active site in subunit 1, a binuclear center (BNC) formed by heme A3 and copper B (CU(B)). The BNC reduces molecular oxygen to 2 water molecules using 4 electrons from cytochrome c in the IMS and 4 protons from the mitochondrial matrix. In Drosophila miranda (Fruit fly), this protein is Cytochrome c oxidase subunit 2 (mt:CoII).